Here is a 228-residue protein sequence, read N- to C-terminus: Translin (228 aa).

Residues 86 to 90 form a DNA/RNA binding region; that stretch reads RFHEH. The segment at 177–198 is leucine-zipper; that stretch reads LDSGFRLLNLKNDSLRKRYDGL. Lysine 187 is modified (N6-acetyllysine). Position 190 is a phosphoserine (serine 190). Lysine 199 is subject to N6-acetyllysine.

It belongs to the translin family. In terms of assembly, ring-shaped heterooctamer of six TSN and two TSNAX subunits, DNA/RNA binding occurs inside the ring.

Its subcellular location is the cytoplasm. The protein localises to the nucleus. In terms of biological role, DNA-binding protein that specifically recognizes consensus sequences at the breakpoint junctions in chromosomal translocations, mostly involving immunoglobulin (Ig)/T-cell receptor gene segments. Seems to recognize single-stranded DNA ends generated by staggered breaks occurring at recombination hot spots. Exhibits both single-stranded and double-stranded endoribonuclease activity. May act as an activator of RNA-induced silencing complex (RISC) by facilitating endonucleolytic cleavage of the siRNA passenger strand. This is Translin (TSN) from Bos taurus (Bovine).